The following is a 102-amino-acid chain: Ribonuclease P protein component 1 (102 aa).

It belongs to the eukaryotic/archaeal RNase P protein component 1 family. Consists of a catalytic RNA component and at least 4-5 protein subunits.

It is found in the cytoplasm. The catalysed reaction is Endonucleolytic cleavage of RNA, removing 5'-extranucleotides from tRNA precursor.. In terms of biological role, part of ribonuclease P, a protein complex that generates mature tRNA molecules by cleaving their 5'-ends. The protein is Ribonuclease P protein component 1 of Archaeoglobus fulgidus (strain ATCC 49558 / DSM 4304 / JCM 9628 / NBRC 100126 / VC-16).